We begin with the raw amino-acid sequence, 493 residues long: Glutamate--tRNA ligase (493 aa).

A 'HIGH' region motif is present at residues 10-20 (PSPTGDPHVGT). Zn(2+) is bound by residues cysteine 107, cysteine 109, cysteine 134, and histidine 136. A 'KMSKS' region motif is present at residues 251 to 255 (KLSKR). Position 254 (lysine 254) interacts with ATP.

The protein belongs to the class-I aminoacyl-tRNA synthetase family. Glutamate--tRNA ligase type 1 subfamily. Monomer. Zn(2+) serves as cofactor.

It is found in the cytoplasm. The catalysed reaction is tRNA(Glu) + L-glutamate + ATP = L-glutamyl-tRNA(Glu) + AMP + diphosphate. Catalyzes the attachment of glutamate to tRNA(Glu) in a two-step reaction: glutamate is first activated by ATP to form Glu-AMP and then transferred to the acceptor end of tRNA(Glu). The polypeptide is Glutamate--tRNA ligase (Stutzerimonas stutzeri (strain A1501) (Pseudomonas stutzeri)).